Reading from the N-terminus, the 75-residue chain is Large ribosomal subunit protein bL32c (75 aa).

The segment at 49-75 (SPGPTTPIKPNPKKQTGRRPRSQRRRT) is disordered. Residues 59-75 (NPKKQTGRRPRSQRRRT) are compositionally biased toward basic residues.

The protein belongs to the bacterial ribosomal protein bL32 family.

Its subcellular location is the plastid. The protein resides in the chloroplast. The chain is Large ribosomal subunit protein bL32c from Nephroselmis olivacea (Green alga).